The following is a 203-amino-acid chain: Methyltransferase-like 26 (203 aa).

This sequence belongs to the UPF0585 family.

The sequence is that of Methyltransferase-like 26 from Xenopus tropicalis (Western clawed frog).